The sequence spans 466 residues: Histidine--tRNA ligase (466 aa).

Belongs to the class-II aminoacyl-tRNA synthetase family. As to quaternary structure, homodimer.

It is found in the cytoplasm. The enzyme catalyses tRNA(His) + L-histidine + ATP = L-histidyl-tRNA(His) + AMP + diphosphate + H(+). In Bifidobacterium longum (strain NCC 2705), this protein is Histidine--tRNA ligase (hisS).